The sequence spans 1160 residues: Pesticidal crystal protein Cry8Ca (1160 aa).

The protein belongs to the delta endotoxin family.

Promotes colloidosmotic lysis by binding to the midgut epithelial cells of insects. Active on various scarabaeid beetles such as Anomala cuprea, A.rufocuprea and Popillia japonica. This is Pesticidal crystal protein Cry8Ca (cry8Ca) from Bacillus thuringiensis subsp. japonensis.